The sequence spans 249 residues: Proteasome activator complex subunit 1 (249 aa).

Positions 60–102 (PLDIPVPDPVKEKEKEERKKQQEKEDKDEKKKGEDEDKGPPCG) are disordered. Basic and acidic residues predominate over residues 68–98 (PVKEKEKEERKKQQEKEDKDEKKKGEDEDKG).

It belongs to the PA28 family. Heterodimer of PSME1 and PSME2, which forms a hexameric ring. PSME1 can form homoheptamers.

Functionally, implicated in immunoproteasome assembly and required for efficient antigen processing. The PA28 activator complex enhances the generation of class I binding peptides by altering the cleavage pattern of the proteasome. The sequence is that of Proteasome activator complex subunit 1 (PSME1) from Homo sapiens (Human).